Here is a 320-residue protein sequence, read N- to C-terminus: tRNA U34 carboxymethyltransferase (320 aa).

Carboxy-S-adenosyl-L-methionine-binding positions include lysine 87, tryptophan 101, lysine 106, glycine 126, 148 to 150 (EPS), 176 to 177 (VE), methionine 192, tyrosine 196, and arginine 311.

It belongs to the class I-like SAM-binding methyltransferase superfamily. CmoB family. Homotetramer.

The catalysed reaction is carboxy-S-adenosyl-L-methionine + 5-hydroxyuridine(34) in tRNA = 5-carboxymethoxyuridine(34) in tRNA + S-adenosyl-L-homocysteine + H(+). In terms of biological role, catalyzes carboxymethyl transfer from carboxy-S-adenosyl-L-methionine (Cx-SAM) to 5-hydroxyuridine (ho5U) to form 5-carboxymethoxyuridine (cmo5U) at position 34 in tRNAs. This Desulfotalea psychrophila (strain LSv54 / DSM 12343) protein is tRNA U34 carboxymethyltransferase.